The chain runs to 509 residues: Aspartyl/glutamyl-tRNA(Asn/Gln) amidotransferase subunit B (509 aa).

Belongs to the GatB/GatE family. GatB subfamily. As to quaternary structure, heterotrimer of A, B and C subunits.

It catalyses the reaction L-glutamyl-tRNA(Gln) + L-glutamine + ATP + H2O = L-glutaminyl-tRNA(Gln) + L-glutamate + ADP + phosphate + H(+). The catalysed reaction is L-aspartyl-tRNA(Asn) + L-glutamine + ATP + H2O = L-asparaginyl-tRNA(Asn) + L-glutamate + ADP + phosphate + 2 H(+). Allows the formation of correctly charged Asn-tRNA(Asn) or Gln-tRNA(Gln) through the transamidation of misacylated Asp-tRNA(Asn) or Glu-tRNA(Gln) in organisms which lack either or both of asparaginyl-tRNA or glutaminyl-tRNA synthetases. The reaction takes place in the presence of glutamine and ATP through an activated phospho-Asp-tRNA(Asn) or phospho-Glu-tRNA(Gln). The protein is Aspartyl/glutamyl-tRNA(Asn/Gln) amidotransferase subunit B of Psychrobacter cryohalolentis (strain ATCC BAA-1226 / DSM 17306 / VKM B-2378 / K5).